A 622-amino-acid chain; its full sequence is Low affinity potassium transport system protein Kup (622 aa).

The next 12 membrane-spanning stretches (helical) occupy residues 9-29 (LPAI…TSPL), 49-69 (VFGF…IKYL), 103-123 (VIMG…TPAI), 137-157 (PQLD…LFMI), 165-185 (VGKL…GLGL), 213-233 (VSFI…VLYA), 247-267 (WFTV…ALLL), 276-296 (PFFL…AALA), 337-357 (IYIP…IVSF), 363-383 (LAAA…ILST), 396-416 (FVAL…TANL), and 419-439 (LLSG…VMTT).

It belongs to the HAK/KUP transporter (TC 2.A.72) family.

The protein resides in the cell inner membrane. The catalysed reaction is K(+)(in) + H(+)(in) = K(+)(out) + H(+)(out). Functionally, responsible for the low-affinity transport of potassium into the cell. Likely operates as a K(+):H(+) symporter. The polypeptide is Low affinity potassium transport system protein Kup (Shigella flexneri).